Here is a 695-residue protein sequence, read N- to C-terminus: RING finger protein 145 (695 aa).

13 helical membrane passes run 53–73, 77–97, 123–143, 146–166, 168–188, 225–245, 275–295, 316–336, 340–360, 384–404, 410–430, 460–480, and 482–502; these read YLALNMHYVGYILSVVLLTLP, LAKLYLYFVAALLLYAGHQIS, FITALVGQLVVCTLCSCVMKT, IWLFSAHMLPLLARLCLVPIE, IVVINKFAMIFTGLEVLYFLA, LVVPVLFMVFWLVLFALQIYT, YSLLGLVFTVSFVALGVLTLC, TEGVTLLILAVQTGLIELQVV, FLLSIILFIVVASILQSMLEI, SLCLFLLVFPSYMAYMICQFF, LLIIISSSILTSLQVLGTLFI, LLEFLVALCVVAYGVSETVFG, and WTVMGSMIIFIHSYYNVWLRA. An RING-type; atypical zinc finger spans residues 537–575; that stretch reads CSICYQDMNSAVITPCSHFFHPGCLKKWLYVQETCPLCH. Positions 585 to 603 are enriched in polar residues; sequence ATGESGSSTNPVSEQSATN. The interval 585–610 is disordered; sequence ATGESGSSTNPVSEQSATNPPLGPVS.

It is found in the membrane. The polypeptide is RING finger protein 145 (rnf145) (Xenopus tropicalis (Western clawed frog)).